Here is a 240-residue protein sequence, read N- to C-terminus: Probable transcriptional regulatory protein Hac_0344 (240 aa).

Belongs to the TACO1 family.

Its subcellular location is the cytoplasm. The protein is Probable transcriptional regulatory protein Hac_0344 of Helicobacter acinonychis (strain Sheeba).